The chain runs to 207 residues: Large ribosomal subunit protein uL4 (207 aa).

The tract at residues 50–76 (AVKNRSAVSGGGRKPWKQKGTGRARQG) is disordered.

Belongs to the universal ribosomal protein uL4 family. As to quaternary structure, part of the 50S ribosomal subunit.

Functionally, one of the primary rRNA binding proteins, this protein initially binds near the 5'-end of the 23S rRNA. It is important during the early stages of 50S assembly. It makes multiple contacts with different domains of the 23S rRNA in the assembled 50S subunit and ribosome. Forms part of the polypeptide exit tunnel. This is Large ribosomal subunit protein uL4 from Macrococcus caseolyticus (strain JCSC5402) (Macrococcoides caseolyticum).